The sequence spans 400 residues: Clotting factor B (400 aa).

The first 23 residues, 1–23, serve as a signal peptide directing secretion; it reads MTWICVITLFALASATLGNKVSR. The Clip domain maps to 36 to 80; it reads ECTARGGLKGSCKSLIDCPSVLATLKDSFPVVCSWNGRFQPIVCC. 3 cysteine pairs are disulfide-bonded: Cys-37–Cys-79, Cys-47–Cys-68, and Cys-53–Cys-80. Positions 104–124 are cleaved as a propeptide — activation peptide; that stretch reads LPRLHISGCGKRKVKIDITTV. Asn-140 carries N-linked (GlcNAc...) asparagine glycosylation. The Peptidase S1 domain maps to 148–392; the sequence is IAGGVEAKIG…YLDWIAKVTN (245 aa). Catalysis depends on charge relay system residues His-192 and Asp-240. Asn-251 carries an N-linked (GlcNAc...) asparagine glycan. 2 disulfide bridges follow: Cys-307–Cys-329 and Cys-340–Cys-368. Ser-344 (charge relay system) is an active-site residue. A glycan (N-linked (GlcNAc...) asparagine) is linked at Asn-352.

The protein belongs to the peptidase S1 family. CLIP subfamily. As to quaternary structure, upon activation by factor C, it is converted to a two-chain active form composed of a light and a heavy chain linked by a disulfide bond.

Its subcellular location is the secreted. The catalysed reaction is Selective cleavage of 98-Arg-|-Ile-99 bond in Limulus proclotting enzyme to form active clotting enzyme.. With respect to regulation, strongly inhibited by alpha2-plasmin inhibitor and DFP. Partially inhibited by benzamidine, leupeptin and PCMB. In terms of biological role, this enzyme is closely associated with an endotoxin-sensitive hemolymph coagulation system which may play important roles in both hemostasis and host defense mechanisms. Its active form catalyzes the activation of proclotting enzyme. Does not activate the mammalian coagulation factors factor IX, factor X, prothrombin, plasminogen, protein C or prekallikrein. Does not hydrolyze fibrinogen. Does not catalyze the activation of factor C or coagulogen. The chain is Clotting factor B from Tachypleus tridentatus (Japanese horseshoe crab).